Consider the following 408-residue polypeptide: MSRGKLEDMEQKETSEVDWIICFALIQSRNPTLWKRALSRKKGDVEDVGALKSEKNLKINPRENSKHIYKWVAPFENGFLNNKSLFAHLEPIYNFLCQNKYKSFEDAVGLKELQSFSKDVSTADINNWFLPRYKILLKILSLKTKEIDFRGLSQVFQTLQILLVSHYSHRIDSDSSFKRTLIDVHVFNFIAKFLFNRILLKKNQNDPKWLQNFYDQGDGKHLCDKVDYKRLCSLHFTLIYSIINIQLIKIKTNQTFEPQILKYVSVLKLIEHILIIIESLIHVLIRFVSKHKLICINRKKAYCRVYLERELSLKKTYLKNFYSVISGVPEKELGGLLKILKIVILSLLETFESIEWQHLKPFLEKFPAHEISLQKKRKYIQAALLITAERNLIARFRLSRWFNETENI.

The protein belongs to the MEI4L family. Interacts with MER2 and REC114. Component of the MER2-MEI4-REC114 complex.

Its subcellular location is the nucleus. It is found in the chromosome. Required for meiotic induction of recombination, viable spore production and chromosome synapsis. Component of the MER2-MEI4-REC114 complex which seems to be required for meiotic double-strand break (DSB) formation. This is Meiosis-specific protein MEI4 (MEI4) from Saccharomyces cerevisiae (strain ATCC 204508 / S288c) (Baker's yeast).